Reading from the N-terminus, the 158-residue chain is Transcriptional repressor NrdR (158 aa).

A zinc finger spans residues 3–34 (CPSCQNTDSRVLESRAADAGRSVRRRRECLHC). An ATP-cone domain is found at 49–139 (ITVLKRNGNR…VYRDFRGVND (91 aa)).

Belongs to the NrdR family. It depends on Zn(2+) as a cofactor.

In terms of biological role, negatively regulates transcription of bacterial ribonucleotide reductase nrd genes and operons by binding to NrdR-boxes. This is Transcriptional repressor NrdR from Prochlorococcus marinus (strain MIT 9313).